Reading from the N-terminus, the 448-residue chain is Trigger factor (448 aa).

The PPIase FKBP-type domain occupies 172 to 257 (GDRVTVDFVG…MKKIEWPHLP (86 aa)).

It belongs to the FKBP-type PPIase family. Tig subfamily.

It localises to the cytoplasm. It catalyses the reaction [protein]-peptidylproline (omega=180) = [protein]-peptidylproline (omega=0). Its function is as follows. Involved in protein export. Acts as a chaperone by maintaining the newly synthesized protein in an open conformation. Functions as a peptidyl-prolyl cis-trans isomerase. The polypeptide is Trigger factor (Burkholderia lata (strain ATCC 17760 / DSM 23089 / LMG 22485 / NCIMB 9086 / R18194 / 383)).